A 174-amino-acid polypeptide reads, in one-letter code: MLAAPRELSYIPQPVVSSKQSPRSGLSNRRRESRARQKILLLGLVLMGFVIGLSLTFLTMQVLIKGYKIDSLKRELSTLQRENEQLQLEVARLKAPERVARVATTKLGMVEPKTEQIYYVPEQAGNGKQVQVATTEPSRPAVTGAAPGRQAWWVALAEALHQWLEPARQAGAGV.

At 1–38 the chain is on the cytoplasmic side; the sequence is MLAAPRELSYIPQPVVSSKQSPRSGLSNRRRESRARQK. A helical transmembrane segment spans residues 39–59; that stretch reads ILLLGLVLMGFVIGLSLTFLT. Residues 60–174 lie on the Extracellular side of the membrane; it reads MQVLIKGYKI…EPARQAGAGV (115 aa).

The protein belongs to the FtsL family.

The protein localises to the cell membrane. In terms of biological role, essential cell division protein. The sequence is that of Cell division protein FtsL from Moorella thermoacetica (strain ATCC 39073 / JCM 9320).